The sequence spans 67 residues: MPQQFEQPQAQQAATQEDDALATTQAAAQTESADQADVLDDILDDIESTLETNAEEYVNSFVQKGGE.

The interval 1 to 36 is disordered; that stretch reads MPQQFEQPQAQQAATQEDDALATTQAAAQTESADQA. Residues 23–61 form an ARC ATPase binding region; sequence TTQAAAQTESADQADVLDDILDDIESTLETNAEEYVNSF. Glu67 is covalently cross-linked (Isoglutamyl lysine isopeptide (Glu-Lys) (interchain with K-? in acceptor proteins)).

Belongs to the prokaryotic ubiquitin-like protein family. Strongly interacts with the proteasome-associated ATPase ARC through a hydrophobic interface; the interacting region of Pup lies in its C-terminal half. There is one Pup binding site per ARC hexamer ring.

It participates in protein degradation; proteasomal Pup-dependent pathway. Its function is as follows. Protein modifier that is covalently attached to lysine residues of substrate proteins, thereby targeting them for proteasomal degradation. The tagging system is termed pupylation. The sequence is that of Prokaryotic ubiquitin-like protein Pup from Bifidobacterium longum (strain DJO10A).